Here is a 145-residue protein sequence, read N- to C-terminus: 3-dehydroquinate dehydratase 1 (145 aa).

Tyr24 (proton acceptor) is an active-site residue. 3 residues coordinate substrate: Asn75, His81, and Asp88. Catalysis depends on His101, which acts as the Proton donor. Residues 102-103 (IS) and Arg112 contribute to the substrate site.

The protein belongs to the type-II 3-dehydroquinase family. Homododecamer.

It catalyses the reaction 3-dehydroquinate = 3-dehydroshikimate + H2O. Its pathway is metabolic intermediate biosynthesis; chorismate biosynthesis; chorismate from D-erythrose 4-phosphate and phosphoenolpyruvate: step 3/7. Catalyzes a trans-dehydration via an enolate intermediate. In Agrobacterium fabrum (strain C58 / ATCC 33970) (Agrobacterium tumefaciens (strain C58)), this protein is 3-dehydroquinate dehydratase 1 (aroQ1).